The sequence spans 722 residues: MGDEDWEAEINPHVSSYVPIFEKDGYSGENGDKFNRTTASSSEMDDGPSGRDHFMKSGFTSGRSYGKRDAGESNKRENTSTTGGFGVGKSFGNRGFSNNRFEDGDSSGFWRESTNDCEDNTTRNRGFSKRGGSRDGNKSEASGPFRRGGRGSFRGCRGGFGLGSQNSELDPDQGMQRGGGLFGSGRPAASDTGNGDTYQSRSGRGRGGYKGLNEEVVTGSGKNSWKSEAEGGESSDTQGPKVTYIPPPPPEDEDSIFAHYQTGINFDKYDTILVEVSGHDAPPAILTFEEANLCQTLNNNIAKAGYTKLTPVQKYSIPIILAGRDLMACAQTGSGKTAAFLLPILAHMMHDGITASRFKELQEPECIIVAPTRELVNQIYLEARKFSFGTCVRAVVIYGGTQLGHSIRQIVQGCNILCATPGRLMDIIGKEKIGLKQIKYLVLDEADRMLDMGFGPEMKKLISCPGMPSKEQRQTLMFSATFPEEIQRLAAEFLKSNYLFVAVGQVGGACRDVQQADLQVGQYSKREKLLEILRNIGDERTMVFVETKKKADFIATFLCQEKISTTSIHGDREQREREQALGDFRFGKCPVLVATSVAARGLDIENVQHVINFDLPSTIDEYVHRIGRTGRCGNTGRAISFFDLESDNHLAQPLVKVLTDAQQDVPAWLEEIAFSTYIPGFSGSTRGNVFASVDTRKGKSTLNTAGFSSSQAPNPVDDESWD.

The disordered stretch occupies residues 1–241; sequence MGDEDWEAEI…GESSDTQGPK (241 aa). Basic and acidic residues-rich tracts occupy residues 21–35 and 66–78; these read FEKD…DKFN and GKRD…KREN. Residues 150 to 162 show a composition bias toward gly residues; sequence RGSFRGCRGGFGL. Phosphoserine occurs at positions 220 and 224. The segment at 226–245 is interaction with RANBP9; that stretch reads KSEAEGGESSDTQGPKVTYI. The Q motif motif lies at 286-314; that stretch reads LTFEEANLCQTLNNNIAKAGYTKLTPVQK. One can recognise a Helicase ATP-binding domain in the interval 317–500; sequence IPIILAGRDL…AEFLKSNYLF (184 aa). 330 to 337 serves as a coordination point for ATP; sequence AQTGSGKT. Residues 444–447 carry the DEAD box motif; the sequence is DEAD. The Helicase C-terminal domain occupies 528-673; sequence KLLEILRNIG…DVPAWLEEIA (146 aa). Over residues 702–713 the composition is skewed to polar residues; it reads LNTAGFSSSQAP. Positions 702–722 are disordered; the sequence is LNTAGFSSSQAPNPVDDESWD. Phosphoserine is present on Ser720.

It belongs to the DEAD box helicase family. DDX4/VASA subfamily. Found in a mRNP complex, at least composed of TDRD1, TDRD6, TDRD7 and DDX4. Interacts with RANBP9. Interacts with RANBP10. Interacts with PIWIL2 and MAEL. Interacts with BMAL1 and CLOCK. Interacts with Tex19.1 and, probably, Tex19.2. Interacts with RBM46.

The protein resides in the cytoplasm. The protein localises to the perinuclear region. The enzyme catalyses ATP + H2O = ADP + phosphate + H(+). ATP-dependent RNA helicase required during spermatogenesis to repress transposable elements and preventing their mobilization, which is essential for the germline integrity. Acts via the piRNA metabolic process, which mediates the repression of transposable elements during meiosis by forming complexes composed of piRNAs and Piwi proteins and governs the methylation and subsequent repression of transposons. Involved in the secondary piRNAs metabolic process, the production of piRNAs in fetal male germ cells through a ping-pong amplification cycle. Required for PIWIL2 slicing-triggered piRNA biogenesis: helicase activity enables utilization of one of the slice cleavage fragments generated by PIWIL2 and processing these pre-piRNAs into piRNAs. This Sus scrofa (Pig) protein is Probable ATP-dependent RNA helicase DDX4 (DDX4).